Here is a 469-residue protein sequence, read N- to C-terminus: Probable ribonuclease FAU-1 (469 aa).

Belongs to the FAU-1 family.

Probable RNase involved in rRNA stability through maturation and/or degradation of precursor rRNAs. Binds to RNA in loop regions with AU-rich sequences. This chain is Probable ribonuclease FAU-1, found in Ignicoccus hospitalis (strain KIN4/I / DSM 18386 / JCM 14125).